Reading from the N-terminus, the 160-residue chain is Cytochrome b6-f complex subunit 4 (160 aa).

3 helical membrane passes run 36–56 (LLYI…GLAV), 95–115 (LLGV…PFIE), and 131–151 (ILFL…TFPI).

Belongs to the cytochrome b family. PetD subfamily. The 4 large subunits of the cytochrome b6-f complex are cytochrome b6, subunit IV (17 kDa polypeptide, petD), cytochrome f and the Rieske protein, while the 4 small subunits are petG, petL, petM and petN. The complex functions as a dimer.

The protein resides in the plastid. It localises to the chloroplast thylakoid membrane. In terms of biological role, component of the cytochrome b6-f complex, which mediates electron transfer between photosystem II (PSII) and photosystem I (PSI), cyclic electron flow around PSI, and state transitions. This Chlamydomonas moewusii (Chlamydomonas eugametos) protein is Cytochrome b6-f complex subunit 4.